The chain runs to 122 residues: Nuclear transport factor 2A (122 aa).

Position 1 is an N-acetylmethionine (M1). The NTF2 domain occupies 6–119 (VAKAFVEHYY…YYVFNDIFRL (114 aa)).

In terms of assembly, interacts with RAN1. In terms of tissue distribution, expressed in roots, stems, leaves and flowers, and, at low levels, in siliques.

The protein resides in the cytoplasm. The protein localises to the nucleus. It localises to the nucleus envelope. Its function is as follows. Facilitates protein transport into the nucleus. Interacts with various nucleoporins and with Ran-GDP. Could be part of a multicomponent system of cytosolic factors that assemble at the pore complex during nuclear import. The protein is Nuclear transport factor 2A of Arabidopsis thaliana (Mouse-ear cress).